A 356-amino-acid polypeptide reads, in one-letter code: Protein-glutamate methylesterase/protein-glutamine glutaminase 2 (356 aa).

The 118-residue stretch at 4 to 121 (KVLIVDDSAV…KGFLEESSHE (118 aa)) folds into the Response regulatory domain. Asp55 is subject to 4-aspartylphosphate. In terms of domain architecture, CheB-type methylesterase spans 169–356 (FATTERIIAI…LELIAKAICR (188 aa)). Residues Ser181, His207, and Asp303 contribute to the active site.

This sequence belongs to the CheB family. In terms of processing, phosphorylated by CheA. Phosphorylation of the N-terminal regulatory domain activates the methylesterase activity.

The protein localises to the cytoplasm. The catalysed reaction is [protein]-L-glutamate 5-O-methyl ester + H2O = L-glutamyl-[protein] + methanol + H(+). It carries out the reaction L-glutaminyl-[protein] + H2O = L-glutamyl-[protein] + NH4(+). In terms of biological role, involved in chemotaxis. Part of a chemotaxis signal transduction system that modulates chemotaxis in response to various stimuli. Catalyzes the demethylation of specific methylglutamate residues introduced into the chemoreceptors (methyl-accepting chemotaxis proteins or MCP) by CheR. Also mediates the irreversible deamidation of specific glutamine residues to glutamic acid. This chain is Protein-glutamate methylesterase/protein-glutamine glutaminase 2, found in Chromobacterium violaceum (strain ATCC 12472 / DSM 30191 / JCM 1249 / CCUG 213 / NBRC 12614 / NCIMB 9131 / NCTC 9757 / MK).